We begin with the raw amino-acid sequence, 385 residues long: Cytochrome b (385 aa).

4 helical membrane-spanning segments follow: residues 32–52 (MGSL…FMAM), 76–98 (WLLR…MHMA), 113–133 (VWII…LGYC), and 179–199 (FFAL…MHFM). Residues H82 and H96 each coordinate heme b. Positions 183 and 197 each coordinate heme b. Residue H202 coordinates a ubiquinone. 4 helical membrane passes run 225–245 (FIFK…LFVF), 289–309 (LLGV…PLTD), 321–341 (ISKL…VLGS), and 348–368 (FVQM…IFVP).

It belongs to the cytochrome b family. As to quaternary structure, fungal cytochrome b-c1 complex contains 10 subunits; 3 respiratory subunits, 2 core proteins and 5 low-molecular weight proteins. Cytochrome b-c1 complex is a homodimer. It depends on heme b as a cofactor.

The protein resides in the mitochondrion inner membrane. Functionally, component of the ubiquinol-cytochrome c reductase complex (complex III or cytochrome b-c1 complex) that is part of the mitochondrial respiratory chain. The b-c1 complex mediates electron transfer from ubiquinol to cytochrome c. Contributes to the generation of a proton gradient across the mitochondrial membrane that is then used for ATP synthesis. This is Cytochrome b (COB) from Monosporozyma servazzii (Yeast).